The primary structure comprises 178 residues: Inorganic pyrophosphatase (178 aa).

K30, R44, and Y56 together coordinate substrate. Mg(2+) contacts are provided by D66, D71, and D103. Y140 is a binding site for substrate.

The protein belongs to the PPase family. In terms of assembly, homohexamer. Requires Mg(2+) as cofactor.

The protein resides in the cytoplasm. The catalysed reaction is diphosphate + H2O = 2 phosphate + H(+). Functionally, catalyzes the hydrolysis of inorganic pyrophosphate (PPi) forming two phosphate ions. This is Inorganic pyrophosphatase from Pyrococcus horikoshii (strain ATCC 700860 / DSM 12428 / JCM 9974 / NBRC 100139 / OT-3).